We begin with the raw amino-acid sequence, 732 residues long: 1,4-alpha-glucan branching enzyme GlgB 2 (732 aa).

The active-site Nucleophile is the D413. The active-site Proton donor is the E466.

It belongs to the glycosyl hydrolase 13 family. GlgB subfamily. As to quaternary structure, monomer.

It catalyses the reaction Transfers a segment of a (1-&gt;4)-alpha-D-glucan chain to a primary hydroxy group in a similar glucan chain.. It functions in the pathway glycan biosynthesis; glycogen biosynthesis. Its function is as follows. Catalyzes the formation of the alpha-1,6-glucosidic linkages in glycogen by scission of a 1,4-alpha-linked oligosaccharide from growing alpha-1,4-glucan chains and the subsequent attachment of the oligosaccharide to the alpha-1,6 position. The chain is 1,4-alpha-glucan branching enzyme GlgB 2 from Rhizobium etli (strain ATCC 51251 / DSM 11541 / JCM 21823 / NBRC 15573 / CFN 42).